The sequence spans 35 residues: Potassium channel toxin (35 aa).

Cystine bridges form between cysteine 6/cysteine 25, cysteine 11/cysteine 30, and cysteine 15/cysteine 32.

It belongs to the short scorpion toxin superfamily. Potassium channel inhibitor family. Alpha-KTx 21 subfamily. Expressed by the venom gland.

The protein localises to the secreted. Functionally, toxin that blocks voltage-gated potassium channels (Kv). In Tityus metuendus (Scorpion), this protein is Potassium channel toxin.